A 516-amino-acid polypeptide reads, in one-letter code: Endoglucanase 20 (516 aa).

Positions 1–23 (MAAGMVATMVLLTCLAAGGLVVG) are cleaved as a signal peptide. Asn-83 carries an N-linked (GlcNAc...) asparagine glycan. The Nucleophile role is filled by Asp-93. Active-site residues include His-416, Asp-468, and Glu-477.

It belongs to the glycosyl hydrolase 9 (cellulase E) family.

It is found in the secreted. It catalyses the reaction Endohydrolysis of (1-&gt;4)-beta-D-glucosidic linkages in cellulose, lichenin and cereal beta-D-glucans.. In Oryza sativa subsp. japonica (Rice), this protein is Endoglucanase 20 (GLU15).